The primary structure comprises 130 residues: Fluoride-specific ion channel FluC (130 aa).

The next 4 membrane-spanning stretches (helical) occupy residues G2 to L22, G36 to I56, F71 to I91, and I100 to L120. Positions 79 and 82 each coordinate Na(+).

It belongs to the fluoride channel Fluc/FEX (TC 1.A.43) family.

The protein resides in the cell inner membrane. It carries out the reaction fluoride(in) = fluoride(out). Its activity is regulated as follows. Na(+) is not transported, but it plays an essential structural role and its presence is essential for fluoride channel function. Functionally, fluoride-specific ion channel. Important for reducing fluoride concentration in the cell, thus reducing its toxicity. The polypeptide is Fluoride-specific ion channel FluC (Francisella tularensis subsp. mediasiatica (strain FSC147)).